Reading from the N-terminus, the 630-residue chain is Mitochondrial Rho GTPase 1 (630 aa).

A Miro 1 domain is found at 1-168; sequence MKEVRVVICG…FYMCRACVIY (168 aa). The Cytoplasmic portion of the chain corresponds to 1-598; it reads MKEVRVVICG…EEDSNKTNYQ (598 aa). GTP is bound by residues 10 to 17, 57 to 61, and 113 to 116; these read GDQGVGKS, DTQSD, and NKSE. EF-hand domains lie at 184-219 and 304-339; these read ATIHALSRIFFLIDKNNDDLLSVDELNSLSEKCFSK and KGYRFLVDLFYQFDRDNDGALNNEELSALFRHTPGL. Ca(2+)-binding residues include Asp-197, Asn-199, Asp-201, Glu-208, Asp-317, Asp-319, Asp-321, and Glu-328. Positions 419–579 constitute a Miro 2 domain; sequence RNVFLCFVVG…FIQLAESAQY (161 aa). Residues 428–435, 459–463, and 527–530 each bind GTP; these read GSKSCGKT, EFQST, and TKAD. Residues 599–619 form a helical; Anchor for type IV membrane protein membrane-spanning segment; it reads LVAALTAFGALLLSVGGSLTW. The Mitochondrial intermembrane segment spans residues 620 to 630; the sequence is KIIKHQYYSKK.

Belongs to the mitochondrial Rho GTPase family.

The protein resides in the mitochondrion outer membrane. Functionally, mitochondrial GTPase involved in mitochondrial trafficking. Probably involved in control of anterograde transport of mitochondria and their subcellular distribution. The protein is Mitochondrial Rho GTPase 1 (gem1) of Schizosaccharomyces pombe (strain 972 / ATCC 24843) (Fission yeast).